The chain runs to 119 residues: MIHGIGVDLIEIDRIKVLYSKQPKLVERILTKNEQHKFNNFTHEQRKIEFLAGRFATKEAFSKALGTGLGKHVAFNDIDCYNDELGKPKIDYEGFIVHVSISHTEHYAMSQVVLEKSAF.

The Mg(2+) site is built by Asp8 and Glu59.

It belongs to the P-Pant transferase superfamily. AcpS family. The cofactor is Mg(2+).

It is found in the cytoplasm. It catalyses the reaction apo-[ACP] + CoA = holo-[ACP] + adenosine 3',5'-bisphosphate + H(+). Transfers the 4'-phosphopantetheine moiety from coenzyme A to a Ser of acyl-carrier-protein. The sequence is that of Holo-[acyl-carrier-protein] synthase from Staphylococcus aureus (strain JH1).